A 154-amino-acid chain; its full sequence is Myoglobin (154 aa).

In terms of domain architecture, Globin spans G2 to K148. S4 is subject to Phosphoserine. H65 lines the nitrite pocket. H65 serves as a coordination point for O2. T68 and T75 each carry phosphothreonine. H94 contributes to the heme b binding site. A Phosphoserine modification is found at S121.

This sequence belongs to the globin family. In terms of assembly, monomeric.

It localises to the cytoplasm. Its subcellular location is the sarcoplasm. It carries out the reaction Fe(III)-heme b-[protein] + nitric oxide + H2O = Fe(II)-heme b-[protein] + nitrite + 2 H(+). The enzyme catalyses H2O2 + AH2 = A + 2 H2O. Its function is as follows. Monomeric heme protein which primary function is to store oxygen and facilitate its diffusion within muscle tissues. Reversibly binds oxygen through a pentacoordinated heme iron and enables its timely and efficient release as needed during periods of heightened demand. Depending on the oxidative conditions of tissues and cells, and in addition to its ability to bind oxygen, it also has a nitrite reductase activity whereby it regulates the production of bioactive nitric oxide. Under stress conditions, like hypoxia and anoxia, it also protects cells against reactive oxygen species thanks to its pseudoperoxidase activity. The sequence is that of Myoglobin from Mus musculus (Mouse).